The sequence spans 321 residues: Solute carrier family 25 member 33 (321 aa).

Solcar repeat units follow at residues 9-118 (ENTL…AKEQ), 126-213 (NSNI…LKKY), and 231-315 (TSFF…IVYL). 6 helical membrane passes run 12-32 (LLHL…TCPL), 49-65 (VYYP…AGMV), 121-141 (GIFV…AAFI), 190-210 (LTAS…YESL), 233-253 (FFGL…IAYP), and 298-318 (QIPN…LLED).

Belongs to the mitochondrial carrier (TC 2.A.29) family. Expressed in the central nervous system. Also expressed in testis and skeletal muscle. Weakly expressed in heart, liver, kidney, prostate, colon and peripheral blood leukocytes.

Its subcellular location is the mitochondrion inner membrane. It carries out the reaction UTP(in) + UDP(out) = UTP(out) + UDP(in). The enzyme catalyses dUTP(out) + UTP(in) = dUTP(in) + UTP(out). It catalyses the reaction 5-methyl-UTP(out) + UTP(in) = 5-methyl-UTP(in) + UTP(out). The catalysed reaction is 5-methyl-UDP(out) + UTP(in) = 5-methyl-UDP(in) + UTP(out). It carries out the reaction UTP(in) + CTP(out) = UTP(out) + CTP(in). The enzyme catalyses CDP(out) + UTP(in) = CDP(in) + UTP(out). It catalyses the reaction dCTP(out) + UTP(in) = dCTP(in) + UTP(out). The catalysed reaction is dCDP(out) + UTP(in) = dCDP(in) + UTP(out). It carries out the reaction UTP(in) + GTP(out) = UTP(out) + GTP(in). The enzyme catalyses UTP(in) + GDP(out) = UTP(out) + GDP(in). It catalyses the reaction dGTP(out) + UTP(in) = dGTP(in) + UTP(out). The catalysed reaction is dGDP(out) + UTP(in) = dGDP(in) + UTP(out). It carries out the reaction ITP(out) + UTP(in) = ITP(in) + UTP(out). Its activity is regulated as follows. Inhibited by pyridoxal 5'-phosphate, 4,7-diphenyl-1,10-phenanthroline, tannic acid, and mercurials (mercury dichloride, mersalyl acid, p-hydroxymercuribenzoate). Mitochondrial transporter that imports/exports pyrimidine nucleotides into and from mitochondria. Selectively transports uridine, thymidine, guanosine, cytosine and inosine (deoxy)nucleoside di- and triphosphates by an antiport mechanism. May import (deoxy)nucleoside triphosphates in exchange for intramitochondrial (deoxy)nucleoside diphosphates, thus providing precursors necessary for de novo synthesis of mitochondrial DNA and RNA while exporting products of their catabolism. Participates in mitochondrial genome maintenance, regulation of mitochondrial membrane potential and mitochondrial respiration. Upon INS or IGF1 stimulation regulates cell growth and proliferation by controlling mitochondrial DNA replication and transcription, the ratio of mitochondria-to nuclear-encoded components of the electron transport chain resulting in control of mitochondrial ROS production. Participates in dendritic cell endocytosis and may associate with mitochondrial oxidative phosphorylation. This chain is Solute carrier family 25 member 33 (SLC25A33), found in Homo sapiens (Human).